An 88-amino-acid polypeptide reads, in one-letter code: Putative defensin-like protein 264 (88 aa).

The first 26 residues, 1–26, serve as a signal peptide directing secretion; sequence MEKMVLRKVVLLAILLSLSCLWVAKA. Intrachain disulfides connect C47–C65, C53–C70, and C57–C72.

This sequence belongs to the DEFL family.

Its subcellular location is the secreted. The sequence is that of Putative defensin-like protein 264 from Arabidopsis thaliana (Mouse-ear cress).